We begin with the raw amino-acid sequence, 533 residues long: MLRHNFRSSIFIRIVANSWSITRSVSSAPIKAESRKQQDSLKNIDSGEAYTALGNIRQKKDVFHYTDRASGTGYSHYSNSVYQHRPYIWPPLRKMYNWNYAFVIAGMVILMSDFEWIKEQIKGASTPFRPEASQKEESTDSGTEIEVKEKPKKKKLGFRERRIIEYEDRLRLYSTPDKIFRYFATLKIIDPNDESGRIFEVFMTPEDFLRSFTPGVMQPRRWGLDSFKAYNPEKHKRHKFSDPNSIFYKLGENGLINFSDYLFLMTLLSTSHADFALAFKIFDVDGNGALDKEEFTKVQQLIMSQTTVGQRHRDHVTPNSSFRVETNSALETYFFGKDGKGSLSSEKFIEFQERLQHDILKMEFERRDAMENSDGLITEESFAQLLLLHAQIAEKKQKHMLKRVKRRFKGDQSKGVSFDETKAFFEFLYHIDDVDIALHFHKMAGMSIDAKLLKRVAVKVTGIPLSDHVVDVVITLFDDNLDGKLSHEEMVAVMRRRMRRGLERPRDTGLFRLFDAVLECGKRAYHASPLPFY.

A mitochondrion-targeting transit peptide spans 1–13; it reads MLRHNFRSSIFIR. Residues 127–147 are disordered; that stretch reads PFRPEASQKEESTDSGTEIEV. EF-hand domains are found at residues 270–305, 337–358, and 465–500; these read TSHA…IMSQ, KDGK…LQHD, and LSDH…RMRR. Ca(2+) contacts are provided by Asp-283, Asp-285, Asn-287, and Glu-294.

The protein belongs to the MICU1 family. MICU1 subfamily.

Its subcellular location is the mitochondrion intermembrane space. The protein resides in the mitochondrion inner membrane. Its function is as follows. Calcium sensor of the mitochondrial calcium uniporter (mcu-1) channel, which senses calcium level via its EF-hand domains. At low calcium levels, micu-1 occludes the pore of the mcu-1 channel, preventing mitochondrial calcium uptake. At higher calcium levels, calcium-binding to micu-1 induces a conformational change that weakens mcu-1-micu-1 interactions and moves micu-1 away from the pore, allowing calcium permeation through the mcu-1 channel. Also required to protect against manganese toxicity by preventing manganese uptake by mcu-1. Modulates the activity of the mitochondrial calcium uniporter protein mcu-1 depending on the level of intracellular calcium in PLM touch receptor neurons following axonal injury. The protein is Calcium uptake protein 1 homolog, mitochondrial of Caenorhabditis briggsae.